A 38-amino-acid chain; its full sequence is Alpha-amylase (38 aa).

This sequence belongs to the glycosyl hydrolase 13 family. As to quaternary structure, monomer. The cofactor is Ca(2+). It depends on chloride as a cofactor. In terms of tissue distribution, expressed by the venom gland.

Its subcellular location is the secreted. The enzyme catalyses Endohydrolysis of (1-&gt;4)-alpha-D-glucosidic linkages in polysaccharides containing three or more (1-&gt;4)-alpha-linked D-glucose units.. The protein is Alpha-amylase of Tityus serrulatus (Brazilian scorpion).